The sequence spans 186 residues: Cell division protein ZapC (186 aa).

This sequence belongs to the ZapC family. Interacts directly with FtsZ.

Its subcellular location is the cytoplasm. Functionally, contributes to the efficiency of the cell division process by stabilizing the polymeric form of the cell division protein FtsZ. Acts by promoting interactions between FtsZ protofilaments and suppressing the GTPase activity of FtsZ. The polypeptide is Cell division protein ZapC (Musicola paradisiaca (strain Ech703) (Dickeya paradisiaca)).